The chain runs to 559 residues: Potassium-transporting ATPase potassium-binding subunit (559 aa).

Transmembrane regions (helical) follow at residues Gly-5 to Ser-25, Leu-27 to Trp-47, Leu-63 to Trp-83, Gly-132 to Ile-152, Leu-170 to Ile-190, Leu-253 to Ala-273, Leu-283 to Val-303, Phe-327 to Val-347, Ala-356 to Val-376, Gly-379 to Gly-399, Met-416 to Met-436, Leu-484 to Ala-504, and Gly-524 to Ile-544.

The protein belongs to the KdpA family. As to quaternary structure, the system is composed of three essential subunits: KdpA, KdpB and KdpC.

The protein resides in the cell inner membrane. Its function is as follows. Part of the high-affinity ATP-driven potassium transport (or Kdp) system, which catalyzes the hydrolysis of ATP coupled with the electrogenic transport of potassium into the cytoplasm. This subunit binds the periplasmic potassium ions and delivers the ions to the membrane domain of KdpB through an intramembrane tunnel. In Salmonella dublin (strain CT_02021853), this protein is Potassium-transporting ATPase potassium-binding subunit.